We begin with the raw amino-acid sequence, 182 residues long: Peptidyl-tRNA hydrolase (182 aa).

TRNA is bound at residue tyrosine 14. Histidine 19 (proton acceptor) is an active-site residue. TRNA contacts are provided by phenylalanine 64, asparagine 66, and asparagine 112.

The protein belongs to the PTH family. In terms of assembly, monomer.

Its subcellular location is the cytoplasm. The catalysed reaction is an N-acyl-L-alpha-aminoacyl-tRNA + H2O = an N-acyl-L-amino acid + a tRNA + H(+). Functionally, hydrolyzes ribosome-free peptidyl-tRNAs (with 1 or more amino acids incorporated), which drop off the ribosome during protein synthesis, or as a result of ribosome stalling. In terms of biological role, catalyzes the release of premature peptidyl moieties from peptidyl-tRNA molecules trapped in stalled 50S ribosomal subunits, and thus maintains levels of free tRNAs and 50S ribosomes. This Wolbachia pipientis wMel protein is Peptidyl-tRNA hydrolase.